A 351-amino-acid polypeptide reads, in one-letter code: Protein-glutamate methylesterase/protein-glutamine glutaminase (351 aa).

The Response regulatory domain maps to 8–125; it reads TVVVVDDSLT…GEDPFAGLGD (118 aa). 4-aspartylphosphate is present on Asp59. Residues 151–345 enclose the CheB-type methylesterase domain; it reads PKIGTVVGIG…PAILNLCERR (195 aa). Active-site residues include Ser162, His188, and Asp287.

It belongs to the CheB family. Phosphorylated by CheA. Phosphorylation of the N-terminal regulatory domain activates the methylesterase activity.

The protein localises to the cytoplasm. The catalysed reaction is [protein]-L-glutamate 5-O-methyl ester + H2O = L-glutamyl-[protein] + methanol + H(+). It carries out the reaction L-glutaminyl-[protein] + H2O = L-glutamyl-[protein] + NH4(+). Involved in chemotaxis. Part of a chemotaxis signal transduction system that modulates chemotaxis in response to various stimuli. Catalyzes the demethylation of specific methylglutamate residues introduced into the chemoreceptors (methyl-accepting chemotaxis proteins or MCP) by CheR. Also mediates the irreversible deamidation of specific glutamine residues to glutamic acid. The chain is Protein-glutamate methylesterase/protein-glutamine glutaminase from Gluconobacter oxydans (strain 621H) (Gluconobacter suboxydans).